A 490-amino-acid polypeptide reads, in one-letter code: Probable cytosol aminopeptidase (490 aa).

Residues lysine 256 and aspartate 261 each coordinate Mn(2+). Residue lysine 268 is part of the active site. Residues aspartate 280, aspartate 340, and glutamate 342 each contribute to the Mn(2+) site. Arginine 344 is a catalytic residue.

It belongs to the peptidase M17 family. Mn(2+) is required as a cofactor.

It localises to the cytoplasm. The catalysed reaction is Release of an N-terminal amino acid, Xaa-|-Yaa-, in which Xaa is preferably Leu, but may be other amino acids including Pro although not Arg or Lys, and Yaa may be Pro. Amino acid amides and methyl esters are also readily hydrolyzed, but rates on arylamides are exceedingly low.. It carries out the reaction Release of an N-terminal amino acid, preferentially leucine, but not glutamic or aspartic acids.. Presumably involved in the processing and regular turnover of intracellular proteins. Catalyzes the removal of unsubstituted N-terminal amino acids from various peptides. The chain is Probable cytosol aminopeptidase from Prochlorococcus marinus (strain MIT 9313).